Reading from the N-terminus, the 71-residue chain is uncharacterized protein (71 aa).

The N-terminal stretch at 1 to 21 (MGVGLHGDHVGGELNSANAFT) is a signal peptide.

This is an uncharacterized protein from Haemophilus influenzae (strain ATCC 51907 / DSM 11121 / KW20 / Rd).